The primary structure comprises 223 residues: RNA-free ribonuclease P (223 aa).

This sequence belongs to the HARP family.

The enzyme catalyses Endonucleolytic cleavage of RNA, removing 5'-extranucleotides from tRNA precursor.. In terms of biological role, RNA-free RNase P that catalyzes the removal of the 5'-leader sequence from pre-tRNA to produce the mature 5'-terminus. This is RNA-free ribonuclease P from Methanococcus maripaludis (strain C7 / ATCC BAA-1331).